We begin with the raw amino-acid sequence, 179 residues long: ATP synthase subunit delta (179 aa).

The protein belongs to the ATPase delta chain family. As to quaternary structure, F-type ATPases have 2 components, F(1) - the catalytic core - and F(0) - the membrane proton channel. F(1) has five subunits: alpha(3), beta(3), gamma(1), delta(1), epsilon(1). F(0) has three main subunits: a(1), b(2) and c(10-14). The alpha and beta chains form an alternating ring which encloses part of the gamma chain. F(1) is attached to F(0) by a central stalk formed by the gamma and epsilon chains, while a peripheral stalk is formed by the delta and b chains.

The protein resides in the cell membrane. In terms of biological role, f(1)F(0) ATP synthase produces ATP from ADP in the presence of a proton or sodium gradient. F-type ATPases consist of two structural domains, F(1) containing the extramembraneous catalytic core and F(0) containing the membrane proton channel, linked together by a central stalk and a peripheral stalk. During catalysis, ATP synthesis in the catalytic domain of F(1) is coupled via a rotary mechanism of the central stalk subunits to proton translocation. Its function is as follows. This protein is part of the stalk that links CF(0) to CF(1). It either transmits conformational changes from CF(0) to CF(1) or is implicated in proton conduction. This chain is ATP synthase subunit delta, found in Ureaplasma urealyticum serovar 10 (strain ATCC 33699 / Western).